Reading from the N-terminus, the 249-residue chain is Undecaprenyl-diphosphatase (249 aa).

The next 8 membrane-spanning stretches (helical) occupy residues 11-31 (GLTEFLPVSSSGHLAIFTAIF), 35-55 (PDVGYFAFLHLATFLAVVIFV), 74-94 (ITLSLKLFVSMIPAAIVGIFF), 101-121 (IFSETFFIGVFLAITGVFMLL), 135-155 (IPYLDAFIIGIFQAFSVLPGI), 175-195 (AVKYSFLMSLPVIFGAGVLEM), 208-228 (FIVAFLTGILGLHLLKKMVIA), and 229-249 (GKLKFFGYYCFLASLFVIFYI).

Belongs to the UppP family.

The protein resides in the cell membrane. The enzyme catalyses di-trans,octa-cis-undecaprenyl diphosphate + H2O = di-trans,octa-cis-undecaprenyl phosphate + phosphate + H(+). Catalyzes the dephosphorylation of undecaprenyl diphosphate (UPP). This chain is Undecaprenyl-diphosphatase, found in Methanococcus vannielii (strain ATCC 35089 / DSM 1224 / JCM 13029 / OCM 148 / SB).